Here is a 289-residue protein sequence, read N- to C-terminus: Rhodopsin (289 aa).

Topologically, residues 1-7 (YLVNPAG) are extracellular. The helical transmembrane segment at 8–32 (YAALGAYMFLLILIGFPVNFLTLYV) threads the bilayer. Over 33–44 (TLEHKKLRTPLN) the chain is Cytoplasmic. Residues 45 to 67 (YILLNLAVADLFMVLGGFTTTMY) traverse the membrane as a helical segment. Residues 68 to 81 (TSMHGYFVLGRLGC) are Extracellular-facing. Cys-81 and Cys-158 are disulfide-bonded. The chain crosses the membrane as a helical span at residues 82–104 (NLEGFFATLGGEIALWSLVVLAI). A 'Ionic lock' involved in activated form stabilization motif is present at residues 105 to 107 (ERW). Over 105–123 (ERWIVGLKPIRNFRFTEDH) the chain is Cytoplasmic. A helical membrane pass occupies residues 124 to 144 (AIMGLAFSWVMALSCAVPPLA). At 145-173 (GWLRYIPEGIQGSCGVDYYTRAEGFNNES) the chain is on the extracellular side. N-linked (GlcNAc...) asparagine glycosylation is present at Asn-171. The chain crosses the membrane as a helical span at residues 174-195 (FVIYMFTVHFLIPLSVIFFCYG). Residues 196–223 (RLLCAVKEAAAAQQESETTQRAEKEVSR) are Cytoplasmic-facing. The chain crosses the membrane as a helical span at residues 224-245 (MVVIMVIGFLVCWLPYASVAWW). Residues 246–257 (IFCNQGSDFGPI) are Extracellular-facing. Residues 258-279 (FMTLPSFFAKRPAIYNPMIYIC) traverse the membrane as a helical segment. Position 267 is an N6-(retinylidene)lysine (Lys-267). Over 280–289 (MNKQFRHCMI) the chain is Cytoplasmic.

The protein belongs to the G-protein coupled receptor 1 family. Opsin subfamily. Post-translationally, phosphorylated on some or all of the serine and threonine residues present in the C-terminal region. Contains one covalently linked retinal chromophore.

The protein localises to the membrane. It is found in the cell projection. The protein resides in the cilium. It localises to the photoreceptor outer segment. Photoreceptor required for image-forming vision at low light intensity. While most salt water fish species use retinal as chromophore, most freshwater fish use 3-dehydroretinal, or a mixture of retinal and 3-dehydroretinal. Light-induced isomerization of 11-cis to all-trans retinal triggers a conformational change that activates signaling via G-proteins. Subsequent receptor phosphorylation mediates displacement of the bound G-protein alpha subunit by arrestin and terminates signaling. This chain is Rhodopsin (rho), found in Limnocottus pallidus (Ray-finned fish).